The sequence spans 242 residues: Probable transcriptional regulatory protein Bcen2424_2294 (242 aa).

Belongs to the TACO1 family.

Its subcellular location is the cytoplasm. This chain is Probable transcriptional regulatory protein Bcen2424_2294, found in Burkholderia cenocepacia (strain HI2424).